Reading from the N-terminus, the 134-residue chain is MTEEPIKEILGAPKAHMAATMEKSPKSEVVITTVPLVSEIQLMAATGGTELSCYRCIIPFAVVVFIAGIVVTAVAYSFNSHGSIISIFGLVVLSSGLFLLASSALCWKVRQRSKKAKRRESQTALVANQRSLFA.

Helical transmembrane passes span 56–76 and 84–104; these read CIIP…AVAY and IISI…ASSA. Ser-121 bears the Phosphoserine mark.

In terms of assembly, interacts (via C-terminus) with TRPA1 and TRPV1. Interacts with TASOR. Expressed in neurons of the myenteric and submucosal plexuses in the gastric body, jejunum and proximal colon. Expressed in arterial endothelial cells and neurons of the central nervous system and peripheral nervous system. Expressed in umbilical artery endothelial cells (at protein level).

It localises to the cell membrane. It is found in the membrane. The protein localises to the perikaryon. The protein resides in the cytoplasm. Its subcellular location is the perinuclear region. It localises to the endoplasmic reticulum. Its function is as follows. Plays a role during embryonic arterial endothelium differentiation and vascular morphogenesis through the ACVRL1 receptor-dependent signaling pathway upon stimulation by bone morphogenetic proteins, such as GDF2/BMP9 and BMP10. Involved in the regulation of nociception, acting as a modulator of the interaction between TRPA1 and TRPV1, two molecular sensors and mediators of pain signals in dorsal root ganglia (DRG) neurons. Mechanistically, it weakens their interaction, thereby releasing the inhibition of TRPA1 by TRPV1 and increasing the single-channel open probability of the TRPA1-TRPV1 complex. The sequence is that of Transmembrane protein 100 (TMEM100) from Homo sapiens (Human).